The following is a 401-amino-acid chain: MRCDRLWRNARLATCAPDRPGLGVVEGGAVASRDGRIVWAGPEAEMPSLEAAETIDCAGRWITPGLVDCHTHLIFGGDRSGEFARRLAGESYESIAREGGGIRATMRATRALDEAAMRAGAEARLAAWAAEGVTTVEIKSGYGLDEATELAMLRAARAIGRAGRFRVAATYLGAHTMPPEMDRAAYLDLVCRRMIPAIAEAGLADAVDAFCEEIAFGAGEVAAVFAAARAAGLAVKLHADQRAEGGGAALAARFGALSADHLEYASAEGIAAMARAGSVAVLLPGAYYVLREAKRPDVAAMRAAGCRMAVATDCNPGTSPIASLRLSAQMACVFFGLSFEEAWLGITRHAADALGLGGECGAIDAGRSCDLAIWSVDSLDQVLAWVGPAPLERRVLKGVDA.

Residues H70 and H72 each contribute to the Fe(3+) site. The Zn(2+) site is built by H70 and H72. 4-imidazolone-5-propanoate-binding residues include R79, Y142, and H175. Y142 contributes to the N-formimidoyl-L-glutamate binding site. A Fe(3+)-binding site is contributed by H238. A Zn(2+)-binding site is contributed by H238. A 4-imidazolone-5-propanoate-binding site is contributed by Q241. D313 contributes to the Fe(3+) binding site. D313 contributes to the Zn(2+) binding site. Residues N315 and G317 each coordinate N-formimidoyl-L-glutamate. T318 contributes to the 4-imidazolone-5-propanoate binding site.

This sequence belongs to the metallo-dependent hydrolases superfamily. HutI family. It depends on Zn(2+) as a cofactor. Fe(3+) serves as cofactor.

It is found in the cytoplasm. It catalyses the reaction 4-imidazolone-5-propanoate + H2O = N-formimidoyl-L-glutamate. It functions in the pathway amino-acid degradation; L-histidine degradation into L-glutamate; N-formimidoyl-L-glutamate from L-histidine: step 3/3. Its function is as follows. Catalyzes the hydrolytic cleavage of the carbon-nitrogen bond in imidazolone-5-propanoate to yield N-formimidoyl-L-glutamate. It is the third step in the universal histidine degradation pathway. This chain is Imidazolonepropionase, found in Acidiphilium cryptum (strain JF-5).